The following is a 140-amino-acid chain: Lysozyme E (140 aa).

The signal sequence occupies residues 1 to 18 (MKAFIVLVALAMAAPALG). The C-type lysozyme domain maps to 19 to 140 (RTLDRCSLAR…GWLPSIDGCF (122 aa)). Intrachain disulfides connect cysteine 24–cysteine 139, cysteine 45–cysteine 129, cysteine 80–cysteine 96, and cysteine 92–cysteine 110. Active-site residues include glutamate 50 and aspartate 68.

The protein belongs to the glycosyl hydrolase 22 family. As to expression, found in the midgut.

The catalysed reaction is Hydrolysis of (1-&gt;4)-beta-linkages between N-acetylmuramic acid and N-acetyl-D-glucosamine residues in a peptidoglycan and between N-acetyl-D-glucosamine residues in chitodextrins.. In terms of biological role, unlikely to play an active role in the humoral immune defense. May have a function in the digestion of bacteria in the food. The chain is Lysozyme E (LysE) from Drosophila melanogaster (Fruit fly).